The chain runs to 534 residues: MRLRGCGPRAAPASSAGASDARLLAPPGRNPFVHELRLSALQKAQVALMTLTLFPVRLLVAAAMMLLAWPLALVASLGSAEKEPEQPPALWRKVVDFLLKAIMRTMWFAGGFHRVAVKGRQALPTEAAILTLAPHSSYFDAIPVTMTMSSIVMKAESRDIPIWGTLIQYIRPVFVSRSDQDSRRKTVEEIKRRAQSNGKWPQIMIFPEGTCTNRTCLITFKPGAFIPGAPVQPVVLRYPNKLDTITWTWQGPGALEILWLTLCQFHNQVEIEFLPVYSPSEEEKRNPALYASNVRRVMAEALGVSVTDYTFEDCQLALAEGQLRLPADTCLLEFARLVRGLGLKPEKLEKDLDRYSERARMKGGEKIGIAEFAASLEVPVSDLLEDMFSLFDESGSGEVDLRECVVALSVVCRPARTLDTIQLAFKMYGAQEDGSVGEGDLSCILKTALGVAELTVTDLFRAIDQEEKGKITFADFHRFAEMYPAFAEEYLYPDQTHFESCAETSPAPIPNGFCADFSPENSDAGRKPVRKKLD.

A disordered region spans residues 1–22 (MRLRGCGPRAAPASSAGASDAR). Residues 1-57 (MRLRGCGPRAAPASSAGASDARLLAPPGRNPFVHELRLSALQKAQVALMTLTLFPVR) are Cytoplasmic-facing. A compositionally biased stretch (low complexity) spans 7–22 (GPRAAPASSAGASDAR). A helical; Signal-anchor for type II membrane protein transmembrane segment spans residues 58–78 (LLVAAAMMLLAWPLALVASLG). Over 79 to 534 (SAEKEPEQPP…GRKPVRKKLD (456 aa)) the chain is Lumenal. The HXXXXD motif motif lies at 135–140 (HSSYFD). EF-hand domains lie at 379 to 414 (PVSD…VCRP) and 451 to 486 (VAEL…YPAF). Asp-392, Ser-394, Ser-396, Glu-398, and Glu-403 together coordinate Ca(2+). A disordered region spans residues 512–534 (GFCADFSPENSDAGRKPVRKKLD). Residues 523-534 (DAGRKPVRKKLD) are compositionally biased toward basic and acidic residues. Positions 531-534 (KKLD) match the Di-lysine motif motif.

Belongs to the 1-acyl-sn-glycerol-3-phosphate acyltransferase family. In terms of tissue distribution, erythrocytes.

It is found in the endoplasmic reticulum membrane. The protein resides in the golgi apparatus membrane. Its subcellular location is the cell membrane. The protein localises to the lipid droplet. It catalyses the reaction a 1-acyl-sn-glycero-3-phosphocholine + an acyl-CoA = a 1,2-diacyl-sn-glycero-3-phosphocholine + CoA. The catalysed reaction is a 1-acyl-sn-glycero-3-phosphate + an acyl-CoA = a 1,2-diacyl-sn-glycero-3-phosphate + CoA. The enzyme catalyses a 1-O-alkyl-sn-glycero-3-phosphocholine + acetyl-CoA = a 1-O-alkyl-2-acetyl-sn-glycero-3-phosphocholine + CoA. It carries out the reaction a 1-O-(1Z-alkenyl)-sn-glycero-3-phosphocholine + an acyl-CoA = a 1-O-(1Z-alkenyl)-2-acyl-sn-glycero-3-phosphocholine + CoA. It catalyses the reaction 1-acyl-sn-glycero-3-phospho-(1'-sn-glycerol) + an acyl-CoA = a 1,2-diacyl-sn-glycero-3-phospho-(1'-sn-glycerol) + CoA. The catalysed reaction is 1-hexadecanoyl-sn-glycero-3-phosphocholine + (9Z)-octadecenoyl-CoA = 1-hexadecanoyl-2-(9Z-octadecenoyl)-sn-glycero-3-phosphocholine + CoA. The enzyme catalyses 1-hexadecanoyl-sn-glycero-3-phosphocholine + hexadecanoyl-CoA = 1,2-dihexadecanoyl-sn-glycero-3-phosphocholine + CoA. It carries out the reaction 1-O-hexadecyl-sn-glycero-3-phosphocholine + hexadecanoyl-CoA = 1-O-hexadecyl-2-hexadecanoyl-sn-glycero-3-phosphocholine + CoA. It catalyses the reaction a 1-O-(1Z-alkenyl)-sn-glycero-3-phosphocholine + hexadecanoyl-CoA = 1-O-(1Z)-alkenyl-2-hexadecanoyl-sn-glycero-3-phosphocholine + CoA. The catalysed reaction is 1-hexadecanoyl-sn-glycero-3-phospho-(1'-sn-glycerol) + hexadecanoyl-CoA = 1,2-dihexadecanoyl-sn-glycero-3-phospho-(1'-sn-glycerol) + CoA. The enzyme catalyses 1-dodecanoyl-sn-glycero-3-phosphocholine + hexadecanoyl-CoA = 1-dodecanoyl-2-hexadecanoyl-sn-glycero-3-phosphocholine + CoA. It carries out the reaction 1-tetradecanoyl-sn-glycero-3-phosphocholine + hexadecanoyl-CoA = 1-tetradecanoyl-2-hexadecanoyl-sn-glycero-3-phosphocholine + CoA. It catalyses the reaction 1-O-octadecyl-sn-glycero-3-phosphocholine + hexadecanoyl-CoA = 1-O-octadecyl-2-hexadecanoyl-sn-glycero-3-phosphocholine + CoA. The catalysed reaction is 1-octadecanoyl-sn-glycero-3-phosphocholine + hexadecanoyl-CoA = 1-octadecanoyl-2-hexadecanoyl-sn-glycero-3-phosphocholine + CoA. The enzyme catalyses 1-(9Z-octadecenoyl)-sn-glycero-3-phosphocholine + hexadecanoyl-CoA = 1-(9Z-octadecenoyl)-2-hexadecanoyl-sn-glycero-3-phosphocholine + CoA. It carries out the reaction 1-eicosanoyl-sn-glycero-3-phosphocholine + hexadecanoyl-CoA = 1-eicosanoyl-2-hexadecanoyl-sn-glycero-3-phosphocholine + CoA. It catalyses the reaction hexanoyl-CoA + 1-hexadecanoyl-sn-glycero-3-phosphocholine = 1-hexadecanoyl-2-hexanoyl-sn-glycero-3-phosphocholine + CoA. The catalysed reaction is octanoyl-CoA + 1-hexadecanoyl-sn-glycero-3-phosphocholine = 1-hexadecanoyl-2-octanoyl-sn-glycero-3-phosphocholine + CoA. The enzyme catalyses decanoyl-CoA + 1-hexadecanoyl-sn-glycero-3-phosphocholine = 1-hexadecanoyl-2-decanoyl-sn-glycero-3-phosphocholine + CoA. It carries out the reaction dodecanoyl-CoA + 1-hexadecanoyl-sn-glycero-3-phosphocholine = 1-hexadecanoyl-2-dodecanoyl-sn-glycero-3-phosphocholine + CoA. It catalyses the reaction tetradecanoyl-CoA + 1-hexadecanoyl-sn-glycero-3-phosphocholine = 1-hexadecanoyl-2-tetradecanoyl-sn-glycero-3-phosphocholine + CoA. The catalysed reaction is (9Z,12Z)-octadecadienoyl-CoA + 1-hexadecanoyl-sn-glycero-3-phosphocholine = 1-hexadecanoyl-2-(9Z,12Z-octadecadienoyl)-sn-glycero-3-phosphocholine + CoA. The enzyme catalyses (4Z,7Z,10Z,13Z,16Z,19Z)-docosahexaenoyl-CoA + 1-hexadecanoyl-sn-glycero-3-phosphocholine = 1-hexadecanoyl-2-(4Z,7Z,10Z,13Z,16Z,19Z-docosahexaenoyl)-sn-glycero-3-phosphocholine + CoA. It carries out the reaction 1-hexadecanoyl-sn-glycero-3-phosphocholine + acetyl-CoA = 1-hexadecanoyl-2-acetyl-sn-glycero-3-phosphocholine + CoA. It catalyses the reaction eicosanoyl-CoA + 1-hexadecanoyl-sn-glycero-3-phosphocholine = 1-hexadecanoyl-2-eicosanoyl-sn-glycero-3-phosphocholine + CoA. The catalysed reaction is 1-O-hexadecyl-sn-glycero-3-phosphocholine + acetyl-CoA = 1-O-hexadecyl-2-acetyl-sn-glycero-3-phosphocholine + CoA. The enzyme catalyses a 1-acyl-sn-glycero-3-phosphocholine + hexadecanoyl-CoA = 1-acyl-2-hexadecanoyl-sn-glycero-3-phosphocholine + CoA. It carries out the reaction a 1-acyl-sn-glycero-3-phosphate + hexadecanoyl-CoA = 1-acyl-2-hexadecanoyl-sn-glycero-3-phosphate + CoA. It catalyses the reaction 1-acyl-sn-glycero-3-phospho-(1'-sn-glycerol) + hexadecanoyl-CoA = 1-acyl-2-hexadecanoyl-sn-glycero-3-phospho-(1'-sn-glycerol) + CoA. It participates in lipid metabolism; phospholipid metabolism. Exhibits acyltransferase activity. Exhibits acetyltransferase activity. Activity is calcium-independent. Catalyzes the conversion of lysophosphatidylcholine (1-acyl-sn-glycero-3-phosphocholine or LPC) into phosphatidylcholine (1,2-diacyl-sn-glycero-3-phosphocholine or PC). Catalyzes the conversion 1-acyl-sn-glycerol-3-phosphate (lysophosphatidic acid or LPA) into 1,2-diacyl-sn-glycerol-3-phosphate (phosphatidic acid or PA) by incorporating an acyl moiety at the sn-2 position of the glycerol backbone. Displays a clear preference for saturated fatty acyl-CoAs, and 1-myristoyl or 1-palmitoyl LPC as acyl donors and acceptors, respectively. Involved in platelet-activating factor (PAF) biosynthesis by catalyzing the conversion of the PAF precursor, 1-O-alkyl-sn-glycero-3-phosphocholine (lyso-PAF) into 1-O-alkyl-2-acetyl-sn-glycero-3-phosphocholine (PAF). May synthesize phosphatidylcholine in pulmonary surfactant, thereby playing a pivotal role in respiratory physiology. Involved in the regulation of lipid droplet number and size. In Homo sapiens (Human), this protein is Lysophosphatidylcholine acyltransferase 1 (LPCAT1).